Here is a 185-residue protein sequence, read N- to C-terminus: Adenine phosphoribosyltransferase (185 aa).

It belongs to the purine/pyrimidine phosphoribosyltransferase family. As to quaternary structure, homodimer.

Its subcellular location is the cytoplasm. It catalyses the reaction AMP + diphosphate = 5-phospho-alpha-D-ribose 1-diphosphate + adenine. The protein operates within purine metabolism; AMP biosynthesis via salvage pathway; AMP from adenine: step 1/1. In terms of biological role, catalyzes a salvage reaction resulting in the formation of AMP, that is energically less costly than de novo synthesis. The sequence is that of Adenine phosphoribosyltransferase from Pectobacterium carotovorum subsp. carotovorum (strain PC1).